The primary structure comprises 256 residues: Putative F-box protein At3g51171 (256 aa).

Positions 1–44 (MVPLPWELEEDILSRLAAQSLVRFRSVCKRWNYLFDEKSFIKNH) constitute an F-box domain.

This Arabidopsis thaliana (Mouse-ear cress) protein is Putative F-box protein At3g51171.